The chain runs to 465 residues: G1/S-specific cyclin CLN2 (465 aa).

The protein belongs to the cyclin family.

Essential for the control of the cell cycle at the G1/S (start) transition. Interacts with the CDC28 protein kinase to form MPF. The protein is G1/S-specific cyclin CLN2 (CLN2) of Candida albicans (Yeast).